We begin with the raw amino-acid sequence, 180 residues long: uncharacterized protein (180 aa).

This is an uncharacterized protein from Methanocaldococcus jannaschii (strain ATCC 43067 / DSM 2661 / JAL-1 / JCM 10045 / NBRC 100440) (Methanococcus jannaschii).